We begin with the raw amino-acid sequence, 82 residues long: Sec-independent protein translocase protein TatA (82 aa).

Residues 1–21 (MLGFGPFELILIVVIIALLFG) traverse the membrane as a helical segment. Basic and acidic residues predominate over residues 36-47 (IKEFKQEMHEPS). A disordered region spans residues 36 to 82 (IKEFKQEMHEPSPPRPQVTDIPSQRLDPVTGAPVSTESTVPASDRRS).

This sequence belongs to the TatA/E family. As to quaternary structure, forms a complex with TatC.

The protein localises to the cell membrane. Its function is as follows. Part of the twin-arginine translocation (Tat) system that transports large folded proteins containing a characteristic twin-arginine motif in their signal peptide across membranes. TatA could form the protein-conducting channel of the Tat system. The chain is Sec-independent protein translocase protein TatA from Deinococcus deserti (strain DSM 17065 / CIP 109153 / LMG 22923 / VCD115).